The following is a 305-amino-acid chain: Tetraspanin-12 (305 aa).

Topologically, residues 1-12 are cytoplasmic; the sequence is MAREDSVKCLRC. S-palmitoyl cysteine attachment occurs at residues Cys-9 and Cys-12. A helical transmembrane segment spans residues 13–33; it reads LLYALNLLFWLMSISVLAVSA. Residues 34–59 are Extracellular-facing; the sequence is WMRDYLNNVLTLTAETRVEEAVILTY. A helical transmembrane segment spans residues 60–80; that stretch reads FPVVHPVMIAVCCFLIIVGML. The Cytoplasmic segment spans residues 81–89; that stretch reads GYCGTVKRN. Cys-83 is lipidated: S-palmitoyl cysteine. A helical transmembrane segment spans residues 90-110; it reads LLLLAWYFGSLLVIFCVELAC. Residues 111 to 224 lie on the Extracellular side of the membrane; that stretch reads GVWTYEQEIM…RGTKQLQVLR (114 aa). The chain crosses the membrane as a helical span at residues 225–245; the sequence is FLGISIGVTQILAMILTITLL. At 246–305 the chain is on the cytoplasmic side; that stretch reads WALYYDRREPGTDQMMALKNDTTQHLPCHSVELLKPSLSRIFEHTSMANSFNTHFEMEEL.

This sequence belongs to the tetraspanin (TM4SF) family. As to quaternary structure, component of a complex, at least composed of TSPAN12, FZD4 and norrin (NDP). Interacts (when palmitoylated) with ADAM10. Interacts with MMP14/MT1-MMP. Palmitoylated; required for interaction with ADAM10. The precise position of palmitoylated residues is unclear and occurs either on Cys-9, Cys-12 and/or Cys-83.

The protein resides in the cell membrane. In terms of biological role, regulator of cell surface receptor signal transduction. Plays a central role in retinal vascularization by regulating norrin (NDP) signal transduction. Acts in concert with norrin (NDP) to promote FZD4 multimerization and subsequent activation of FZD4, leading to promote accumulation of beta-catenin (CTNNB1) and stimulate LEF/TCF-mediated transcriptional programs. Suprisingly, it only activates the norrin (NDP)-dependent activation of FZD4, while it does not activate the Wnt-dependent activation of FZD4, suggesting the existence of a Wnt-independent signaling that also promote accumulation the beta-catenin (CTNNB1). Acts as a regulator of membrane proteinases such as ADAM10 and MMP14/MT1-MMP. Activates ADAM10-dependent cleavage activity of amyloid precursor protein (APP). Activates MMP14/MT1-MMP-dependent cleavage activity. In Bos taurus (Bovine), this protein is Tetraspanin-12 (TSPAN12).